Consider the following 160-residue polypeptide: Phosphopantetheine adenylyltransferase (160 aa).

Ser-10 contributes to the substrate binding site. Residues 10 to 11 and His-18 each bind ATP; that span reads SF. Residues Lys-42, Thr-74, and Arg-88 each coordinate substrate. ATP-binding positions include 89–91, Glu-99, and 124–130; these read GLR and YSFISST.

It belongs to the bacterial CoaD family. In terms of assembly, homohexamer. The cofactor is Mg(2+).

The protein resides in the cytoplasm. It catalyses the reaction (R)-4'-phosphopantetheine + ATP + H(+) = 3'-dephospho-CoA + diphosphate. The protein operates within cofactor biosynthesis; coenzyme A biosynthesis; CoA from (R)-pantothenate: step 4/5. Reversibly transfers an adenylyl group from ATP to 4'-phosphopantetheine, yielding dephospho-CoA (dPCoA) and pyrophosphate. The sequence is that of Phosphopantetheine adenylyltransferase from Leptospira borgpetersenii serovar Hardjo-bovis (strain L550).